The following is a 780-amino-acid chain: Cullin-5 (780 aa).

Position 34 is a phosphoserine (serine 34). Threonine 210 bears the Phosphothreonine mark. The 62-residue stretch at 711 to 772 (RILRTQEAII…HKYIRRDEAD (62 aa)) folds into the Cullin neddylation domain. Lysine 724 participates in a covalent cross-link: Glycyl lysine isopeptide (Lys-Gly) (interchain with G-Cter in NEDD8).

It belongs to the cullin family. As to quaternary structure, component of multiple cullin-5-RING E3 ubiquitin-protein ligase complexes (ECS complexes, also named CRL5 complexes) formed of CUL5, Elongin BC (ELOB and ELOC), RNF7/RBX2 and a variable SOCS box domain-containing protein as substrate-specific recognition component. CUL5-containing ECS complexes specifically contain RNF7/RBX2, and not RBX1, as catalytic subunit. Component of the ECS(ASB2) complex with the substrate recognition component ASB2. Component of the ECS(ASB6) complex with the substrate recognition component ASB6. Component of the ECS(ASB7) complex with the substrate recognition component ASB7. Component of the ECS(ASB9) complex with the substrate recognition component ASB9. Component of the ECS(ASB11) complex with the substrate recognition component ASB11. Component of the ECS(ASB12) complex with the substrate recognition component ASB12. Component of the ECS(LRRC41) complex with the substrate recognition component LRRC41. Component of the ECS(SOCS1) complex with the substrate recognition component SOCS1. Component of the ECS(SOCS2) complex with the substrate recognition component SOCS2. Component of the ECS(WSB1) complex with the substrate recognition subunit WSB1. Component of the ECS(SOCS3) complex with the substrate recognition component SOCS3. Component of the ECS(SOCS7) complex with the substrate recognition component SOCS7. Component of the ECS(SPSB1) complex with the substrate recognition component SPSB1. Component of the ECS(SPSB3) complex with the substrate recognition component SPSB3. Component of the ECS(SPSB2) complex with the substrate recognition component SPSB2. Component of the ECS(SPSB4) complex with the substrate recognition component SPSB4. Component of the ECS(RAB40) complex with the substrate recognition subunit RAB40A, RAB40B or RAB40C. Component of the ECS(KLHDC1) complex with the substrate recognition component KLHDC1. Component of the ECS(PCMTD1) complex with the substrate recognition subunit PCMTD1. May also form complexes containing RBX1 and ELOA or VHL; additional evidence is however required to confirm this result in vivo. Interacts (when neddylated) with ARIH2; leading to activate the E3 ligase activity of ARIH2. Interacts with ERCC6; the interaction is induced by DNA damaging agents or inhibitors of RNA polymerase II elongation. Interacts with ELOA (via the BC-box). Interacts (unneddylated form) with DCUN1D1, DCUN1D2, DCUN1D3, DCUN1D4 and DCUN1D5; these interactions promote the cullin neddylation. Neddylated; which enhances the ubiquitination activity of ECS complexes and prevents binding of the inhibitor CAND1. Deneddylated via its interaction with the COP9 signalosome (CSN).

Its subcellular location is the nucleus. The protein operates within protein modification; protein ubiquitination. Core component of multiple cullin-5-RING E3 ubiquitin-protein ligase complexes (ECS complexes, also named CRL5 complexes), which mediate the ubiquitination and subsequent proteasomal degradation of target proteins. Acts a scaffold protein that contributes to catalysis through positioning of the substrate and the ubiquitin-conjugating enzyme. The functional specificity of the E3 ubiquitin-protein ligase complex depends on the variable SOCS box-containing substrate recognition component. Acts as a key regulator of neuron positioning during cortex development: component of various SOCS-containing ECS complexes, such as the ECS(SOCS7) complex, that regulate reelin signaling by mediating ubiquitination and degradation of DAB1. ECS(SOCS1) seems to direct ubiquitination of JAK2. The ECS(SOCS2) complex mediates the ubiquitination and subsequent proteasomal degradation of phosphorylated EPOR and GHR. The ECS(SPSB3) complex catalyzes ubiquitination of nuclear CGAS. ECS(KLHDC1) complex is part of the DesCEND (destruction via C-end degrons) pathway and mediates ubiquitination and degradation of truncated SELENOS selenoprotein produced by failed UGA/Sec decoding, which ends with a glycine. The ECS(ASB9) complex mediates ubiquitination and degradation of CKB. As part of some ECS complex, promotes 'Lys-11'-linked ubiquitination and degradation of BTRC. As part of a multisubunit ECS complex, polyubiquitinates monoubiquitinated POLR2A. As part of the ECS(RAB40C) complex, mediates ANKRD28 ubiquitination and degradation, thereby regulating protein phosphatase 6 (PP6) complex activity and focal adhesion assembly during cell migration. As part of the ECS(RAB40A) complex, mediates RHOU 'Lys-48'-linked ubiquitination and degradation, thus inhibiting focal adhesion disassembly during cell migration. As part of the ECS(RAB40B) complex, mediates LIMA1/EPLIN and RAP2 ubiquitination, thereby regulating actin cytoskeleton dynamics and stress fiber formation during cell migration. May form a cell surface vasopressin receptor. The protein is Cullin-5 of Rattus norvegicus (Rat).